The primary structure comprises 406 residues: Succinylornithine transaminase (406 aa).

Lys252 carries the post-translational modification N6-(pyridoxal phosphate)lysine.

The protein belongs to the class-III pyridoxal-phosphate-dependent aminotransferase family. AstC subfamily. It depends on pyridoxal 5'-phosphate as a cofactor.

The catalysed reaction is N(2)-succinyl-L-ornithine + 2-oxoglutarate = N-succinyl-L-glutamate 5-semialdehyde + L-glutamate. It participates in amino-acid degradation; L-arginine degradation via AST pathway; L-glutamate and succinate from L-arginine: step 3/5. In terms of biological role, catalyzes the transamination of N(2)-succinylornithine and alpha-ketoglutarate into N(2)-succinylglutamate semialdehyde and glutamate. Can also act as an acetylornithine aminotransferase. The sequence is that of Succinylornithine transaminase from Shigella boydii serotype 18 (strain CDC 3083-94 / BS512).